Reading from the N-terminus, the 238-residue chain is Large ribosomal subunit protein uL3 (238 aa).

Belongs to the universal ribosomal protein uL3 family. As to quaternary structure, part of the 50S ribosomal subunit. Forms a cluster with proteins L14 and L19.

Its function is as follows. One of the primary rRNA binding proteins, it binds directly near the 3'-end of the 23S rRNA, where it nucleates assembly of the 50S subunit. This Mesoplasma florum (strain ATCC 33453 / NBRC 100688 / NCTC 11704 / L1) (Acholeplasma florum) protein is Large ribosomal subunit protein uL3.